The following is a 757-amino-acid chain: Mitofusin-2 (757 aa).

At 1-604 the chain is on the cytoplasmic side; it reads MSLLFSRCNS…TQEELMVSMV (604 aa). Residues 30-94 form a part of a helix bundle domain, formed by helices from N-terminal and C-terminal regions region; the sequence is KHFVTAKKKI…VRGISEVLAR (65 aa). The Dynamin-type G domain maps to 93–342; that stretch reads ARRHMKVAFF…VRMFEFQNFE (250 aa). The segment at 103–110 is G1 motif; it reads GRTSNGKS. A GTP-binding site is contributed by 106–111; sequence SNGKST. Residue T111 is modified to Phosphothreonine; by PINK1. Residues 129 to 130 are G2 motif; sequence TT. The segment at 199–202 is G3 motif; the sequence is DSPG. Residue 258–261 participates in GTP binding; it reads NRWD. Residues 258-261 form a G4 motif region; that stretch reads NRWD. Position 288 (E288) is a region of interest, G5 motif. Residues S305 and K307 each coordinate GTP. The segment at 359–385 is part of a helix bundle domain, formed by helices from N-terminal and C-terminal regions; the sequence is EQHTVRAKQIAEAVRLIMDSLHIAAQE. The stretch at 406 to 434 forms a coiled coil; sequence KQLELLAQDYKLRIKQITEEVERQVSTAM. At S442 the chain carries Phosphoserine. A helical transmembrane segment spans residues 605-625; it reads TGLASLTSRTSMGILVVGGVV. Residue W626 is a topological domain, mitochondrial intermembrane. The helical transmembrane segment at 627–647 threads the bilayer; that stretch reads KAVGWRLIALSFGLYGLLYVY. The Cytoplasmic portion of the chain corresponds to 648-757; the sequence is ERLTWTTKAK…FTHQYLQPSR (110 aa). A coiled-coil region spans residues 696–738; that stretch reads FAHLCQQVDITRDNLEQEIAAMNKKVEALDSLQSRAKLLRNKA. Residues 722–753 are part of a helix bundle domain, formed by helices from N-terminal and C-terminal regions; the sequence is EALDSLQSRAKLLRNKAGWLDSELNMFTHQYL.

Belongs to the TRAFAC class dynamin-like GTPase superfamily. Dynamin/Fzo/YdjA family. Mitofusin subfamily. In terms of assembly, forms homomultimers and heteromultimers with MFN1. Oligomerization is essential for mitochondrion fusion. Interacts with VAT1. Interacts with STOML2; may form heterooligomers. Interacts (phosphorylated) with PRKN. Interacts with EIF2AK3. Interacts with THG1L; THG1L probably functions as a guanyl-nucleotide exchange factor/GEF, activating MFN2. In terms of processing, phosphorylated by PINK1. Post-translationally, ubiquitinated by non-degradative ubiquitin by PRKN, promoting mitochondrial fusion; deubiquitination by USP30 inhibits mitochondrial fusion. Ubiquitinated by HUWE1 when dietary stearate (C18:0) levels are low; ubiquitination inhibits mitochondrial fusion. In terms of tissue distribution, ubiquitous. Expression is markedly reduced in ApoE-knockout mouse atherosclerotic arteries.

It localises to the mitochondrion outer membrane. The enzyme catalyses GTP + H2O = GDP + phosphate + H(+). Its function is as follows. Mitochondrial outer membrane GTPase that mediates mitochondrial clustering and fusion. Mitochondria are highly dynamic organelles, and their morphology is determined by the equilibrium between mitochondrial fusion and fission events. Overexpression induces the formation of mitochondrial networks. Membrane clustering requires GTPase activity and may involve a major rearrangement of the coiled coil domains. Plays a central role in mitochondrial metabolism and may be associated with obesity and/or apoptosis processes. Plays an important role in the regulation of vascular smooth muscle cell proliferation. Involved in the clearance of damaged mitochondria via selective autophagy (mitophagy). Is required for PRKN recruitment to dysfunctional mitochondria. Involved in the control of unfolded protein response (UPR) upon ER stress including activation of apoptosis and autophagy during ER stress. Acts as an upstream regulator of EIF2AK3 and suppresses EIF2AK3 activation under basal conditions. This chain is Mitofusin-2 (Mfn2), found in Mus musculus (Mouse).